The following is a 394-amino-acid chain: Elongation factor Tu (394 aa).

Residues 10 to 204 form the tr-type G domain; the sequence is KPHVNVGTIG…HLDTYIPEPE (195 aa). Residues 19–26 are G1; sequence GHVDHGKT. 19–26 provides a ligand contact to GTP; it reads GHVDHGKT. Residue T26 participates in Mg(2+) binding. The segment at 60 to 64 is G2; sequence GITIN. A G3 region spans residues 81-84; it reads DCPG. Residues 81-85 and 136-139 each bind GTP; these read DCPGH and NKCD. The segment at 136 to 139 is G4; the sequence is NKCD. Positions 174–176 are G5; the sequence is SAL.

It belongs to the TRAFAC class translation factor GTPase superfamily. Classic translation factor GTPase family. EF-Tu/EF-1A subfamily. Monomer.

The protein localises to the cytoplasm. The catalysed reaction is GTP + H2O = GDP + phosphate + H(+). Functionally, GTP hydrolase that promotes the GTP-dependent binding of aminoacyl-tRNA to the A-site of ribosomes during protein biosynthesis. The sequence is that of Elongation factor Tu from Aeromonas hydrophila subsp. hydrophila (strain ATCC 7966 / DSM 30187 / BCRC 13018 / CCUG 14551 / JCM 1027 / KCTC 2358 / NCIMB 9240 / NCTC 8049).